Reading from the N-terminus, the 104-residue chain is Gallinacin-11 (104 aa).

A signal peptide spans 1–22; it reads MKLFSCLMALLLFLLQAVPGLG. Cystine bridges form between cysteine 30–cysteine 60, cysteine 37–cysteine 53, and cysteine 43–cysteine 61.

It belongs to the beta-defensin family. Detected in outer membrane of the vitelline layer of the egg (at protein level). Expressed in the liver, gall bladder, kidney, testis, ovary and male and female reproductive tracts. Expressed in the ovarian stroma, but not in the ovarian follicles. No expression is detected in bone marrow.

The protein localises to the secreted. It is found in the cytoplasmic granule. Has bactericidal activity. This Gallus gallus (Chicken) protein is Gallinacin-11 (GAL11).